A 24-amino-acid polypeptide reads, in one-letter code: U1-poneritoxin-Na1a (24 aa).

This sequence belongs to the non-disulfide-bridged peptide (NDBP) superfamily. Medium-length antimicrobial peptide (group 3) family. Ponericin-W subfamily. Expressed by the venom gland.

Its subcellular location is the secreted. It is found in the target cell membrane. Its function is as follows. Has a broad spectrum of activity against both Gram-positive and Gram-negative bacteria and S.cerevisiae. Has insecticidal and hemolytic activities. May act by disrupting the integrity of the bacterial cell membrane. The protein is U1-poneritoxin-Na1a of Neoponera apicalis (Ant).